Reading from the N-terminus, the 701-residue chain is Heterodisulfide reductase subunit A-like protein (701 aa).

FAD is bound at residue 152–175 (GGGIAGIFAALDIANAGYKVYLVE). One can recognise a 4Fe-4S ferredoxin-type 1 domain in the interval 239–268 (KQTWVDWDLCTGCGACTDVCPPKARVPDEF). [4Fe-4S] cluster-binding residues include Cys-248, Cys-251, Cys-254, Cys-326, Cys-627, Cys-630, Cys-633, Cys-637, Cys-660, Cys-663, Cys-666, and Cys-670. 2 consecutive 4Fe-4S ferredoxin-type domains span residues 618 to 647 (LVSEVDKEKCSGCGICVPLCPYGAITMTKY) and 651 to 680 (MRAEINPALCKGCGVCAAACPSKAIKLHGF).

This sequence belongs to the HdrA family. As to quaternary structure, the heterodisulfide reductase is composed of three subunits; HdlA, HdlB and HdlC. It forms a complex with the F420-non-reducing hydrogenase (Mvh), which provides the reducing equivalents to the heterodisulfide reductase. It depends on [4Fe-4S] cluster as a cofactor. The cofactor is FAD.

Its subcellular location is the cytoplasm. Its function is as follows. Has oxidoreductase activity. The Hdl and Mvh subunits may together mediate electron transfer from hydrogen to an unidentified electron acceptor on the cytoplasmic side of the membrane. This Archaeoglobus profundus (strain DSM 5631 / JCM 9629 / NBRC 100127 / Av18) protein is Heterodisulfide reductase subunit A-like protein (hdlA).